A 339-amino-acid polypeptide reads, in one-letter code: Ornithine utilization regulator (339 aa).

The 98-residue stretch at 241-338 (TRVRRLLLAR…GKLPSDYREA (98 aa)) folds into the HTH araC/xylS-type domain. 2 DNA-binding regions (H-T-H motif) span residues 258-279 (EQAARELHTSGRSLRRHLSSLG) and 305-328 (LYEIALLLGFNDSSNFRRAFRKWT).

Functionally, probably activates the ArgJ gene that encodes ornithine acetyltransferase. Binds to its own promoter-operator region. Probably binds ornithine. The protein is Ornithine utilization regulator (oruR) of Pseudomonas aeruginosa (strain ATCC 15692 / DSM 22644 / CIP 104116 / JCM 14847 / LMG 12228 / 1C / PRS 101 / PAO1).